We begin with the raw amino-acid sequence, 415 residues long: Transcription factor gsfR2 (415 aa).

A DNA-binding region (zn(2)-C6 fungal-type) is located at residues 9 to 36 (CITCVQSKRKCDQGLPKCQRCLAKNIHC). The segment at 65–91 (AEEPSRGCQLQRSPARPTSPTHSPHAN) is disordered. Positions 72 to 88 (CQLQRSPARPTSPTHSP) are enriched in polar residues.

The protein resides in the nucleus. Transcription factor that regulates expression of the gene cluster that mediates the biosynthesis of Griseofulvin, an important antifungal drug that has been in use for a long time for treating dermatophyte infections. In Penicillium aethiopicum, this protein is Transcription factor gsfR2.